Reading from the N-terminus, the 257-residue chain is Ig delta chain C region secreted form (257 aa).

One can recognise an Ig-like 1 domain in the interval 5–105; the sequence is PDMFLLSECK…WDSQSSKRVT (101 aa). A disulfide bridge links C26 with C78. N58 and N75 each carry an N-linked (GlcNAc...) asparagine glycan. The interval 89–111 is disordered; the sequence is PFKFPESWDSQSSKRVTPTLQAK. Polar residues predominate over residues 96-111; that stretch reads WDSQSSKRVTPTLQAK. N112, N135, and N227 each carry an N-linked (GlcNAc...) asparagine glycan. The Ig-like 2 domain maps to 133-233; that stretch reads PSNLTVNILT…TKLNASKSLA (101 aa).

Cell lines producing IgD contain several mRNA species for Ig delta chains. In plasmacytomas, the secreted form is the major component, and the membrane-bound form is a minor component. In spleen, however, the membrane-bound form is the major component. These two forms differ in their C-terminal segments.

The protein resides in the secreted. The protein is Ig delta chain C region secreted form of Mus musculus (Mouse).